A 418-amino-acid polypeptide reads, in one-letter code: MGLTLTQKILSAKAGREVKPGELIEIDVDMVLGNDITAPVAIKEFEKIGVDKVFDNTKIALVPDHFVPSKDIKSAEQVNVMRKFAKKYNIVNFFEVGRMGIEHALLPEQGLVLPGDVVIGADSHTCTYGALTCFATGVGSTDMAAAMATGKAWFKVPEAIKFVLKGNLGKWVSGKDVILYIIGKIGVDGALYKSMEFTGNIKALSIDDRFTIANMAIEAGAKNGIFDFDEITEAYVKKRAKREYKVFERDEDAEYSEVIEINLDDIRPQVAFPHLPENTRSIDEVGKVKIDQVVIGSCTNGRLSDMEIAYRILKGKKVHPDVRLIIFPATQEIYLECVKRGYIEEFIKAGAAVSTPTCGPCLGGHMGVLAKGERALATTNRNFVGRMGHPESEVYLASPAVAAASAIAGYIVSPEEVE.

[4Fe-4S] cluster is bound by residues C298, C358, and C361.

The protein belongs to the aconitase/IPM isomerase family. LeuC type 2 subfamily. As to quaternary structure, heterodimer of LeuC and LeuD. [4Fe-4S] cluster serves as cofactor.

It catalyses the reaction (2R,3S)-3-isopropylmalate = (2S)-2-isopropylmalate. It functions in the pathway amino-acid biosynthesis; L-leucine biosynthesis; L-leucine from 3-methyl-2-oxobutanoate: step 2/4. Catalyzes the isomerization between 2-isopropylmalate and 3-isopropylmalate, via the formation of 2-isopropylmaleate. The polypeptide is 3-isopropylmalate dehydratase large subunit (Caldanaerobacter subterraneus subsp. tengcongensis (strain DSM 15242 / JCM 11007 / NBRC 100824 / MB4) (Thermoanaerobacter tengcongensis)).